We begin with the raw amino-acid sequence, 80 residues long: Raniseptin-7 (80 aa).

An N-terminal signal peptide occupies residues 1–22 (MAFLKKSLFLVLFLGIVSLSIC). Positions 23-49 (EEEKREGEEEEKQEEENEELSEEELRE) are excised as a propeptide. The segment at 27–46 (REGEEEEKQEEENEELSEEE) is disordered. The span at 30–44 (EEEEKQEEENEELSE) shows a compositional bias: acidic residues.

It belongs to the frog skin active peptide (FSAP) family. Dermaseptin subfamily. As to expression, expressed by the skin glands.

It localises to the secreted. In terms of biological role, has antibacterial activity. The polypeptide is Raniseptin-7 (Boana raniceps (Chaco tree frog)).